The sequence spans 636 residues: Biosynthetic arginine decarboxylase (636 aa).

Residue K101 is modified to N6-(pyridoxal phosphate)lysine. 286 to 296 serves as a coordination point for substrate; it reads FDVGGGLAVDY.

This sequence belongs to the Orn/Lys/Arg decarboxylase class-II family. SpeA subfamily. Mg(2+) is required as a cofactor. It depends on pyridoxal 5'-phosphate as a cofactor.

It carries out the reaction L-arginine + H(+) = agmatine + CO2. It functions in the pathway amine and polyamine biosynthesis; agmatine biosynthesis; agmatine from L-arginine: step 1/1. In terms of biological role, catalyzes the biosynthesis of agmatine from arginine. The polypeptide is Biosynthetic arginine decarboxylase (Shewanella denitrificans (strain OS217 / ATCC BAA-1090 / DSM 15013)).